Consider the following 515-residue polypeptide: uncharacterized protein (515 aa).

Disordered stretches follow at residues 117 to 188 (DNIL…RKSQ), 362 to 453 (RSTS…AESM), and 496 to 515 (GNAV…DYFN). 3 stretches are compositionally biased toward basic and acidic residues: residues 370–380 (KNVESETKQEE), 388–402 (PAED…EVIE), and 428–438 (PIKEIEDKVEP). Residues 502-515 (ADTESMDDFMDYFN) are compositionally biased toward acidic residues.

This is an uncharacterized protein from Ostreid herpesvirus 1 (isolate France) (OsHV-1).